A 377-amino-acid chain; its full sequence is Palmitoyltransferase ZDHHC16 (377 aa).

Over 1–79 the chain is Cytoplasmic; it reads MRGQWSLLLG…WLVDNVIRWC (79 aa). The helical transmembrane segment at 80–100 threads the bilayer; that stretch reads GVVFVVLVIVLTSSIVAIAYL. At 101–116 the chain is on the lumenal side; the sequence is CVLPLILQTYSVPRLC. A helical transmembrane segment spans residues 117–137; that stretch reads WHFFYSHWNLILIVFHYYQAI. Over 138–198 the chain is Cytoplasmic; the sequence is TTPPGYPPQG…NNCVGHYNHR (61 aa). One can recognise a DHHC domain in the interval 155 to 205; that stretch reads SICKKCINPKPARTHHCSICNRCVLKMDHHCPWLNNCVGHYNHRYFFSFCF. Cys-185 acts as the S-palmitoyl cysteine intermediate in catalysis. The chain crosses the membrane as a helical span at residues 199–219; sequence YFFSFCFFMTLGCVYCSYGSW. Over 220 to 266 the chain is Lumenal; it reads DLFREAYAAIEKMKQLDKNKLQAVANQTYHQTPPPTFSFRERVTHKS. A helical transmembrane segment spans residues 267–287; it reads LVYLWFLCSSVALALGALTIW. Residues 288–377 lie on the Cytoplasmic side of the membrane; it reads HAVLISRGET…TAHSASVMAV (90 aa).

Belongs to the DHHC palmitoyltransferase family. In terms of assembly, interacts with ABL1. Interacts with COPS5/JAB1.

The protein localises to the endoplasmic reticulum membrane. The enzyme catalyses L-cysteinyl-[protein] + hexadecanoyl-CoA = S-hexadecanoyl-L-cysteinyl-[protein] + CoA. Palmitoyl acyltransferase that mediates palmitoylation of proteins such as PLN and ZDHHC6. Required during embryonic heart development and cardiac function, possibly by mediating palmitoylation of PLN, thereby affecting PLN phosphorylation and homooligomerization. Also required for eye development. Palmitoylates ZDHHC6, affecting the quaternary assembly of ZDHHC6, its localization, stability and function. May play a role in DNA damage response. May be involved in apoptosis regulation. Involved in the proliferation of neural stem cells by regulating the FGF/ERK pathway. The chain is Palmitoyltransferase ZDHHC16 from Bos taurus (Bovine).